The primary structure comprises 351 residues: Photosystem II D2 protein (351 aa).

A helical transmembrane segment spans residues threonine 39 to threonine 59. Histidine 116 provides a ligand contact to chlorophyll a. A helical membrane pass occupies residues glycine 123 to proline 139. Pheophytin a is bound by residues glutamine 128 and asparagine 141. A helical membrane pass occupies residues valine 151–alanine 164. Position 196 (histidine 196) interacts with chlorophyll a. The chain crosses the membrane as a helical span at residues glycine 206–aspartate 226. Residues histidine 213 and phenylalanine 260 each coordinate a plastoquinone. Fe cation is bound at residue histidine 213. Position 267 (histidine 267) interacts with Fe cation. A helical transmembrane segment spans residues glycine 277–arginine 293.

Belongs to the reaction center PufL/M/PsbA/D family. As to quaternary structure, PSII is composed of 1 copy each of membrane proteins PsbA, PsbB, PsbC, PsbD, PsbE, PsbF, PsbH, PsbI, PsbJ, PsbK, PsbL, PsbM, PsbT, PsbX, PsbY, PsbZ, Psb30/Ycf12, at least 3 peripheral proteins of the oxygen-evolving complex and a large number of cofactors. It forms dimeric complexes. The D1/D2 heterodimer binds P680, chlorophylls that are the primary electron donor of PSII, and subsequent electron acceptors. It shares a non-heme iron and each subunit binds pheophytin, quinone, additional chlorophylls, carotenoids and lipids. There is also a Cl(-1) ion associated with D1 and D2, which is required for oxygen evolution. The PSII complex binds additional chlorophylls, carotenoids and specific lipids. serves as cofactor.

It is found in the plastid. Its subcellular location is the chloroplast thylakoid membrane. It carries out the reaction 2 a plastoquinone + 4 hnu + 2 H2O = 2 a plastoquinol + O2. Photosystem II (PSII) is a light-driven water:plastoquinone oxidoreductase that uses light energy to abstract electrons from H(2)O, generating O(2) and a proton gradient subsequently used for ATP formation. It consists of a core antenna complex that captures photons, and an electron transfer chain that converts photonic excitation into a charge separation. The D1/D2 (PsbA/PsbD) reaction center heterodimer binds P680, the primary electron donor of PSII as well as several subsequent electron acceptors. D2 is needed for assembly of a stable PSII complex. This Trieres chinensis (Marine centric diatom) protein is Photosystem II D2 protein.